The sequence spans 163 residues: RNA pyrophosphohydrolase (163 aa).

The region spanning 6 to 149 is the Nudix hydrolase domain; that stretch reads GYRLNVGIVI…KRDVYRQVMK (144 aa). The Nudix box signature appears at 38–59; that stretch reads GGIHLTESPEEAMYRELFEELG.

This sequence belongs to the Nudix hydrolase family. RppH subfamily. Requires a divalent metal cation as cofactor.

Functionally, accelerates the degradation of transcripts by removing pyrophosphate from the 5'-end of triphosphorylated RNA, leading to a more labile monophosphorylated state that can stimulate subsequent ribonuclease cleavage. The chain is RNA pyrophosphohydrolase from Hamiltonella defensa subsp. Acyrthosiphon pisum (strain 5AT).